Consider the following 296-residue polypeptide: Ribosomal protein L11 methyltransferase (296 aa).

Residues Thr151, Gly172, Asp194, and Asn233 each coordinate S-adenosyl-L-methionine.

The protein belongs to the methyltransferase superfamily. PrmA family.

The protein localises to the cytoplasm. The catalysed reaction is L-lysyl-[protein] + 3 S-adenosyl-L-methionine = N(6),N(6),N(6)-trimethyl-L-lysyl-[protein] + 3 S-adenosyl-L-homocysteine + 3 H(+). Its function is as follows. Methylates ribosomal protein L11. This chain is Ribosomal protein L11 methyltransferase, found in Thiobacillus denitrificans (strain ATCC 25259 / T1).